Consider the following 387-residue polypeptide: Cytochrome b (387 aa).

The next 4 membrane-spanning stretches (helical) occupy residues 32 to 52 (FGSLLALCLGIQIVTGVTLAM), 76 to 98 (WLVRYLHSNTASAFFFLVYLHIG), 113 to 133 (TWAIGTVILIVMMATAFLGYV), and 179 to 199 (FFALHFLLPFVLAALALMHLI). Residues His-82 and His-96 each coordinate heme b. Heme b-binding residues include His-183 and His-197. His-202 is an a ubiquinone binding site. 4 helical membrane passes run 226 to 246 (FIFKDLITIFIFFIVLSIFVF), 290 to 310 (LLGVIAMFAAILALMVMPITD), 322 to 342 (LSKVVFYIFVANFLILMQIGA), and 349 to 369 (FIEFGQISTIIYFAYFFVIVP).

The protein belongs to the cytochrome b family. In terms of assembly, fungal cytochrome b-c1 complex contains 10 subunits; 3 respiratory subunits, 2 core proteins and 5 low-molecular weight proteins. Cytochrome b-c1 complex is a homodimer. Requires heme b as cofactor.

The protein localises to the mitochondrion inner membrane. Functionally, component of the ubiquinol-cytochrome c reductase complex (complex III or cytochrome b-c1 complex) that is part of the mitochondrial respiratory chain. The b-c1 complex mediates electron transfer from ubiquinol to cytochrome c. Contributes to the generation of a proton gradient across the mitochondrial membrane that is then used for ATP synthesis. The protein is Cytochrome b (cob) of Emericella nidulans (Aspergillus nidulans).